Reading from the N-terminus, the 428-residue chain is MADYVIQNLTSNLQAMQYAYSSREEMPVWATKLLTPIFMAVAVLTTLPPPGPLRVIVGLTAFTSLWLHVLTHWVSGPAFFMDAIFMISITVRWLLMFVAGTPEIDYHQTTQSGTTITHKGTKDSSTLRQGLTKLRWSVELWSCWRGQGWNFVDQHLPRGAERTQSRWEFLVSNAGRVLLNQYISDLVRKYAFCALWPAQVDAHVDFSSLPLLNRHGLVALQLIRDSLMLDSEYRKASILFVGLHLSTPDRWPSLFGNMRDLYTVRNFWGRVWHQIFRQIFTRCGDIVANALNAQKGTLLYKYSRLYVGFLVSGVQHYACALLIPSAEYGWGMFWQMPAYAAVVTVEDILKYYGREAGIQDGNFVRFLGYIWTAYWMTLIYALPVGFVSDIGGFTGDGNFQLSDPCVSCSSTSIPVSGFESIDLEFGLW.

Residue N8 is glycosylated (N-linked (GlcNAc...) asparagine). 6 consecutive transmembrane segments (helical) span residues L33–L53, V55–S75, A78–V98, L305–S325, G329–L349, and F366–F386.

This sequence belongs to the wax synthase family.

Its subcellular location is the membrane. It functions in the pathway polyketide biosynthesis. In terms of biological role, acetyltransferase; part of the gene cluster that mediates the biosynthesis of asperlin, a polyketide showing anti-inflammatory, antitumor and antibiotic activities. The first step of the asperlin biosynthesis is the production of the intermediate 2,4,6-octatrienoic acid by the highly redusing polyketide synthase alnA with cleavage of the PKS product by the esterase alnB. 2,4,6-octatrienoic acid is further converted to asperlin via several steps involving the remaining enzymes from the cluster. The polypeptide is Acetyltransferase sirH (Emericella nidulans (strain FGSC A4 / ATCC 38163 / CBS 112.46 / NRRL 194 / M139) (Aspergillus nidulans)).